The primary structure comprises 477 residues: UDP-N-acetylmuramate--L-alanine ligase (477 aa).

115–121 (GTHGKTT) provides a ligand contact to ATP.

It belongs to the MurCDEF family.

The protein localises to the cytoplasm. The catalysed reaction is UDP-N-acetyl-alpha-D-muramate + L-alanine + ATP = UDP-N-acetyl-alpha-D-muramoyl-L-alanine + ADP + phosphate + H(+). It participates in cell wall biogenesis; peptidoglycan biosynthesis. Functionally, cell wall formation. The chain is UDP-N-acetylmuramate--L-alanine ligase from Gluconobacter oxydans (strain 621H) (Gluconobacter suboxydans).